Reading from the N-terminus, the 465-residue chain is 23S rRNA (uracil(1939)-C(5))-methyltransferase RlmD (465 aa).

The interval 1 to 24 (MSEAVPLSTRRASSAGDAPGRAPV) is disordered. Residues 16-80 (GDAPGRAPVL…PTYEQAQVVD (65 aa)) form the TRAM domain. [4Fe-4S] cluster is bound by residues Cys-93, Cys-99, Cys-102, and Cys-181. Gln-289, Phe-318, Asn-323, Glu-339, Asn-367, and Asp-388 together coordinate S-adenosyl-L-methionine. Cys-421 acts as the Nucleophile in catalysis.

It belongs to the class I-like SAM-binding methyltransferase superfamily. RNA M5U methyltransferase family. RlmD subfamily.

It catalyses the reaction uridine(1939) in 23S rRNA + S-adenosyl-L-methionine = 5-methyluridine(1939) in 23S rRNA + S-adenosyl-L-homocysteine + H(+). Catalyzes the formation of 5-methyl-uridine at position 1939 (m5U1939) in 23S rRNA. This Burkholderia mallei (strain ATCC 23344) protein is 23S rRNA (uracil(1939)-C(5))-methyltransferase RlmD.